A 283-amino-acid polypeptide reads, in one-letter code: MLLVHAHPDDETIMTGGTIARYLDEGVDVRVLTFTLGEEGEVIGDRWAQLVADGGADQLGGFRIGELTGALAALSPPGGSPVQPWFLGGAGRWRDSGMAGSAAARHPRALVNAGFDEPVGVLTDILESFAPQVVITYDSAGTYGHPDHKLVHEVTAAALARVAASRPEQIKVYESVTEHSALQAGLVAAARRVPDGWRMPGPGELPSYPDAMVTAEIDVRTQYDRKVAALAAHATQVTVAPSGTEYALSNNIVQPIFGHEHFIRVDAAAVAGPRETDLFDGIG.

His-7, Asp-10, and His-148 together coordinate Zn(2+).

The protein belongs to the MshB deacetylase family. Zn(2+) serves as cofactor.

It catalyses the reaction 1D-myo-inositol 2-acetamido-2-deoxy-alpha-D-glucopyranoside + H2O = 1D-myo-inositol 2-amino-2-deoxy-alpha-D-glucopyranoside + acetate. Its function is as follows. Catalyzes the deacetylation of 1D-myo-inositol 2-acetamido-2-deoxy-alpha-D-glucopyranoside (GlcNAc-Ins) in the mycothiol biosynthesis pathway. The chain is 1D-myo-inositol 2-acetamido-2-deoxy-alpha-D-glucopyranoside deacetylase from Gordonia bronchialis (strain ATCC 25592 / DSM 43247 / BCRC 13721 / JCM 3198 / KCTC 3076 / NBRC 16047 / NCTC 10667) (Rhodococcus bronchialis).